A 557-amino-acid chain; its full sequence is Inositol-3-phosphate synthase 1 (557 aa).

NAD(+)-binding residues include G67, G68, N69, N70, D141, S177, V178, Q188, R191, T228, A229, N230, T231, G278, S279, D303, S306, N337, N338, D339, and K352. A Phosphoserine modification is found at S279. S357 is subject to Phosphoserine. Residues G390, D391, D419, and S420 each coordinate NAD(+). The tract at residues 512–557 (GPGIKPGEVVATSPLPCKKEPTPATNGCTGDANGHPQAPTPKLSTA) is disordered. S524 is modified (phosphoserine).

It belongs to the myo-inositol 1-phosphate synthase family. NAD(+) is required as a cofactor. As to expression, in testis, it is expressed in Sertoli cells. Highly expressed in 2 types of germ cells, pachytene spermatocytes and round spermatids.

The protein resides in the cytoplasm. The catalysed reaction is D-glucose 6-phosphate = 1D-myo-inositol 3-phosphate. Its pathway is polyol metabolism; myo-inositol biosynthesis; myo-inositol from D-glucose 6-phosphate: step 1/2. In terms of biological role, key enzyme in myo-inositol biosynthesis pathway that catalyzes the conversion of glucose 6-phosphate to 1-myo-inositol 1-phosphate in a NAD-dependent manner. Rate-limiting enzyme in the synthesis of all inositol-containing compounds. The protein is Inositol-3-phosphate synthase 1 (Isyna1) of Mus musculus (Mouse).